A 914-amino-acid chain; its full sequence is Isoleucine--tRNA ligase (914 aa).

Residues 64-74 (PYANGNFHLGH) carry the 'HIGH' region motif. Position 557 (Glu557) interacts with L-isoleucyl-5'-AMP. The 'KMSKS' region signature appears at 598–602 (PMSKS). Lys601 provides a ligand contact to ATP. Residues Cys889, Cys892, Cys906, and Cys909 each contribute to the Zn(2+) site.

Belongs to the class-I aminoacyl-tRNA synthetase family. IleS type 1 subfamily. In terms of assembly, monomer. Zn(2+) is required as a cofactor.

The protein resides in the cytoplasm. It catalyses the reaction tRNA(Ile) + L-isoleucine + ATP = L-isoleucyl-tRNA(Ile) + AMP + diphosphate. Its function is as follows. Catalyzes the attachment of isoleucine to tRNA(Ile). As IleRS can inadvertently accommodate and process structurally similar amino acids such as valine, to avoid such errors it has two additional distinct tRNA(Ile)-dependent editing activities. One activity is designated as 'pretransfer' editing and involves the hydrolysis of activated Val-AMP. The other activity is designated 'posttransfer' editing and involves deacylation of mischarged Val-tRNA(Ile). This chain is Isoleucine--tRNA ligase, found in Leptospira interrogans serogroup Icterohaemorrhagiae serovar copenhageni (strain Fiocruz L1-130).